Reading from the N-terminus, the 419-residue chain is Light-independent protochlorophyllide reductase subunit N (419 aa).

The [4Fe-4S] cluster site is built by cysteine 20, cysteine 45, and cysteine 102.

The protein belongs to the BchN/ChlN family. In terms of assembly, protochlorophyllide reductase is composed of three subunits; BchL, BchN and BchB. Forms a heterotetramer of two BchB and two BchN subunits. The cofactor is [4Fe-4S] cluster.

The enzyme catalyses chlorophyllide a + oxidized 2[4Fe-4S]-[ferredoxin] + 2 ADP + 2 phosphate = protochlorophyllide a + reduced 2[4Fe-4S]-[ferredoxin] + 2 ATP + 2 H2O. It functions in the pathway porphyrin-containing compound metabolism; bacteriochlorophyll biosynthesis (light-independent). In terms of biological role, component of the dark-operative protochlorophyllide reductase (DPOR) that uses Mg-ATP and reduced ferredoxin to reduce ring D of protochlorophyllide (Pchlide) to form chlorophyllide a (Chlide). This reaction is light-independent. The NB-protein (BchN-BchB) is the catalytic component of the complex. This is Light-independent protochlorophyllide reductase subunit N from Chlorobaculum tepidum (strain ATCC 49652 / DSM 12025 / NBRC 103806 / TLS) (Chlorobium tepidum).